The primary structure comprises 469 residues: Aspartyl/glutamyl-tRNA(Asn/Gln) amidotransferase subunit B (469 aa).

The protein belongs to the GatB/GatE family. GatB subfamily. Heterotrimer of A, B and C subunits.

It carries out the reaction L-glutamyl-tRNA(Gln) + L-glutamine + ATP + H2O = L-glutaminyl-tRNA(Gln) + L-glutamate + ADP + phosphate + H(+). The enzyme catalyses L-aspartyl-tRNA(Asn) + L-glutamine + ATP + H2O = L-asparaginyl-tRNA(Asn) + L-glutamate + ADP + phosphate + 2 H(+). Its function is as follows. Allows the formation of correctly charged Asn-tRNA(Asn) or Gln-tRNA(Gln) through the transamidation of misacylated Asp-tRNA(Asn) or Glu-tRNA(Gln) in organisms which lack either or both of asparaginyl-tRNA or glutaminyl-tRNA synthetases. The reaction takes place in the presence of glutamine and ATP through an activated phospho-Asp-tRNA(Asn) or phospho-Glu-tRNA(Gln). The polypeptide is Aspartyl/glutamyl-tRNA(Asn/Gln) amidotransferase subunit B (Methanococcus maripaludis (strain C7 / ATCC BAA-1331)).